A 166-amino-acid chain; its full sequence is NAD(P)H-quinone oxidoreductase subunit I, chloroplastic (166 aa).

4Fe-4S ferredoxin-type domains are found at residues glycine 55 to lysine 84 and leucine 95 to glutamate 124. [4Fe-4S] cluster contacts are provided by cysteine 64, cysteine 67, cysteine 70, cysteine 74, cysteine 104, cysteine 107, cysteine 110, and cysteine 114.

This sequence belongs to the complex I 23 kDa subunit family. In terms of assembly, NDH is composed of at least 16 different subunits, 5 of which are encoded in the nucleus. [4Fe-4S] cluster is required as a cofactor.

The protein localises to the plastid. It is found in the chloroplast thylakoid membrane. The enzyme catalyses a plastoquinone + NADH + (n+1) H(+)(in) = a plastoquinol + NAD(+) + n H(+)(out). It carries out the reaction a plastoquinone + NADPH + (n+1) H(+)(in) = a plastoquinol + NADP(+) + n H(+)(out). Functionally, NDH shuttles electrons from NAD(P)H:plastoquinone, via FMN and iron-sulfur (Fe-S) centers, to quinones in the photosynthetic chain and possibly in a chloroplast respiratory chain. The immediate electron acceptor for the enzyme in this species is believed to be plastoquinone. Couples the redox reaction to proton translocation, and thus conserves the redox energy in a proton gradient. In Marshallia caespitosa (Barbara's buttons), this protein is NAD(P)H-quinone oxidoreductase subunit I, chloroplastic.